The chain runs to 266 residues: MIQITVVQIDNYGPWTVTPNPRRESDLQALQSRLYCDMNLQFGAHKGLAFYTRFDNIIAITNGIDLETHKRIQNSVKNRYPFTVSMAVASAETAYEAQKLATKTIQEYGSAQDDVRKEVLDVANEFVSNGYVQLAHVDINDITGKLTDLETAYDTYLSVQKTKLKLMEELKKYDSLGFFIGGDNFMCPCNGMNEKDFLCMFEDIKDSCGIELKAGIGIGKTAEDASNLADIGLEVIREGKTDSQVYTLKQEIDEQKNVPYNYMCPI.

Belongs to the archaeal-type GTP cyclohydrolase family.

It carries out the reaction GTP + 3 H2O = 2-amino-5-formylamino-6-(5-phospho-D-ribosylamino)pyrimidin-4(3H)-one + 2 phosphate + 2 H(+). Catalyzes the formation of 2-amino-5-formylamino-6-ribofuranosylamino-4(3H)-pyrimidinone ribonucleotide monophosphate and inorganic phosphate from GTP. Also has an independent pyrophosphate phosphohydrolase activity. This is GTP cyclohydrolase III from Methanococcus maripaludis (strain DSM 14266 / JCM 13030 / NBRC 101832 / S2 / LL).